Consider the following 335-residue polypeptide: MITSQTPITVLGAGSYGTALAITFSRNGSPTHLWGHNPVHIAQMQTERQNYRFLPDVIFPEDLHLESNLAQAMEYSQDILIVVPSHAFGEILIKIKPHLKAHHRLIWATKGLERNTGRLLQTVVEEQLGTQYPLAVLSGPTFAKELAQGLPSAITLAANNEQFAREFQSRIHCSKGFRVYINSDMTGVQLGGAIKNVIAIGAGISDGMGFGANARTALITRGIAEITRLGISLGANTNTFMGMSGLGDLVLTCTDNQSRNRRFGLMLGKGLDAQMAMENIGQVVEGFYNTKEAYLLAQRQGVEMPITEQIYQMLFCGKNAQDVAISLLGRACKGE.

Residues serine 15, tyrosine 16, histidine 36, and lysine 110 each contribute to the NADPH site. Sn-glycerol 3-phosphate-binding residues include lysine 110, glycine 139, and threonine 141. An NADPH-binding site is contributed by alanine 143. Positions 195, 248, 258, 259, and 260 each coordinate sn-glycerol 3-phosphate. Lysine 195 acts as the Proton acceptor in catalysis. Arginine 259 provides a ligand contact to NADPH. 2 residues coordinate NADPH: valine 283 and glutamate 285.

The protein belongs to the NAD-dependent glycerol-3-phosphate dehydrogenase family.

The protein localises to the cytoplasm. The catalysed reaction is sn-glycerol 3-phosphate + NAD(+) = dihydroxyacetone phosphate + NADH + H(+). The enzyme catalyses sn-glycerol 3-phosphate + NADP(+) = dihydroxyacetone phosphate + NADPH + H(+). It participates in membrane lipid metabolism; glycerophospholipid metabolism. In terms of biological role, catalyzes the reduction of the glycolytic intermediate dihydroxyacetone phosphate (DHAP) to sn-glycerol 3-phosphate (G3P), the key precursor for phospholipid synthesis. The polypeptide is Glycerol-3-phosphate dehydrogenase [NAD(P)+] (Haemophilus influenzae (strain 86-028NP)).